Here is an 864-residue protein sequence, read N- to C-terminus: MRLALLWALGLLGAGSPRPSPPLPNIGGTEEEQQASPERTLSGSMESRVVQDSPPMSLADVLQTGLPEALRISLELDSESHVLELLQNRDLIPGRPTLVWYQPDGTRMVSEGYSLENCCYRGRVQGHPSSWVSLCACSGIRGLIVLSPERGYTLELGPGDLQRPVISRIQDHLLLGHTCAPSWHASVPTRAGPDLLLEQHHAHRLKRDVVTETKIVELVIVADNSEVRKYPDFQQLLNRTLEAALLLDTFFQPLNVRVALVGLEAWTQHNLIEMSSNPAVLLDNFLRWRRTDLLPRLPHDSAQLVTVTSFSGPMVGMAIQNSICSPDFSGGVNMDHSTSILGVASSIAHELGHSLGLDHDSPGHSCPCPGPAPAKSCIMEASTDFLPGLNFSNCSRQALEKALLEGMGSCLFERQPSLAPMSSLCGNMFVDPGEQCDCGFPDECTDPCCDHFTCQLRPGAQCASDGPCCQNCKLHPAGWLCRPPTDDCDLPEFCPGDSSQCPSDIRLGDGEPCASGEAVCMHGRCASYARQCQSLWGPGAQPAAPLCLQTANTRGNAFGSCGRSPGGSYMPCAPRDVMCGQLQCQWGRSQPLLGSVQDRLSEVLEANGTQLNCSWVDLDLGNDVAQPLLALPGTACGPGLVCIGHRCQPVDLLGAQECRRKCHGHGVCDSSGHCRCEEGWAPPDCMTQLKATSSLTTGLLLSLLLLLVLVLLGASYWHRARLHQRLCQLKGSSCQYRAPQSCPPERPGPPQRAQQMTGTKQASVVSFPVPPSRPLPPNPVPKKLQAALADRSNPPTRPLPADPVVRRPKSQGPTKPPPPRKPLPANPQGQHPPGDLPGPGDGSLPLVVPSRPAPPPPAASSLYL.

Residues 1–17 (MRLALLWALGLLGAGSP) form the signal peptide. The segment at 18-45 (RPSPPLPNIGGTEEEQQASPERTLSGSM) is disordered. The propeptide occupies 18–207 (RPSPPLPNIG…EQHHAHRLKR (190 aa)). The segment covering 34 to 45 (QASPERTLSGSM) has biased composition (polar residues). The Cysteine switch motif lies at 177–184 (HTCAPSWH). Position 179 (cysteine 179) interacts with Zn(2+). Over 208-696 (DVVTETKIVE…TQLKATSSLT (489 aa)) the chain is Extracellular. The Peptidase M12B domain occupies 214 to 415 (KIVELVIVAD…GMGSCLFERQ (202 aa)). Asparagine 238 carries N-linked (GlcNAc...) asparagine glycosylation. 4 disulfides stabilise this stretch: cysteine 324–cysteine 410, cysteine 366–cysteine 394, cysteine 368–cysteine 377, and cysteine 481–cysteine 501. Position 349 (histidine 349) interacts with Zn(2+). Glutamate 350 is an active-site residue. Zn(2+) contacts are provided by histidine 353 and histidine 359. 2 N-linked (GlcNAc...) asparagine glycosylation sites follow: asparagine 390 and asparagine 393. The Disintegrin domain maps to 422-509 (SSLCGNMFVD…QCPSDIRLGD (88 aa)). 2 N-linked (GlcNAc...) asparagine glycosylation sites follow: asparagine 607 and asparagine 612. Cystine bridges form between cysteine 658/cysteine 668, cysteine 662/cysteine 674, and cysteine 676/cysteine 685. An EGF-like domain is found at 658 to 686 (CRRKCHGHGVCDSSGHCRCEEGWAPPDCM). Residues 697 to 717 (TGLLLSLLLLLVLVLLGASYW) traverse the membrane as a helical segment. 2 positions are modified to phosphotyrosine; by HCK and LCK: tyrosine 716 and tyrosine 736. Residues 718-864 (HRARLHQRLC…PPPAASSLYL (147 aa)) lie on the Cytoplasmic side of the membrane. The disordered stretch occupies residues 736–864 (YRAPQSCPPE…PPPAASSLYL (129 aa)). Pro residues predominate over residues 741 to 750 (SCPPERPGPP). The segment covering 752-762 (RAQQMTGTKQA) has biased composition (polar residues). 2 stretches are compositionally biased toward pro residues: residues 768–780 (PVPP…PNPV) and 814–825 (TKPPPPRKPLPA). 2 consecutive short sequence motifs (SH3-binding) follow at residues 816–822 (PPPPRKP) and 851–857 (RPAPPPP).

As to quaternary structure, interacts specifically with Src family protein-tyrosine kinases (PTKs). Interacts with ITAGV-ITGB3 (vitronectin receptor). Interacts with SH3GL2 and SNX9; this interaction occurs preferentially with ADAM15 precursor, rather than the processed form, suggesting it occurs in a secretory pathway compartment prior to the medial Golgi. Interacts with ITAG9-ITGB1. Interacts with SH3PXD2A. Interacts with ITAGV-ITGB1. Interacts with GRB2, HCK, ITSN1, ITSN2, LYN, MAPK1, MAPK3, NCF1, NCK1, nephrocystin, PTK6, SNX33, LCK and SRC. Zn(2+) is required as a cofactor. The precursor is cleaved by a furin endopeptidase. An additional membrane proximal site of cleavage affects a small percentage of the proteins and results in disulfide-linked fragments. The prodomain is apparently cleaved in several positions that are N-terminal of the furin cleavage site. In terms of processing, may be partially sialylated. Post-translationally, phosphorylation increases association with PTKs. As to expression, expressed moderately in pericytes of retina. Expressed in testis and in spermatozoa from the caput, corpus, and cauda epididymis, as well as in non-capacitated and acrosome-reacted sperm (at protein level). Highly expressed in heart, brain, lung, and kidney. Expressed at lower levels in spleen, liver, testis and muscle.

It is found in the endomembrane system. The protein localises to the cell junction. It localises to the adherens junction. The protein resides in the cell projection. Its subcellular location is the cilium. It is found in the flagellum. The protein localises to the cytoplasmic vesicle. It localises to the secretory vesicle. The protein resides in the acrosome. Its function is as follows. Active metalloproteinase with gelatinolytic and collagenolytic activity. Plays a role in the wound healing process. Mediates both heterotypic intraepithelial cell/T-cell interactions and homotypic T-cell aggregation. Inhibits beta-1 integrin-mediated cell adhesion and migration of airway smooth muscle cells. Suppresses cell motility on or towards fibronectin possibly by driving alpha-v/beta-1 integrin (ITAGV-ITGB1) cell surface expression via ERK1/2 inactivation. Cleaves E-cadherin in response to growth factor deprivation. Plays a role in glomerular cell migration. Plays a role in pathological neovascularization. May play a role in cartilage remodeling. May be proteolytically processed, during sperm epididymal maturation and the acrosome reaction. May play a role in sperm-egg binding through its disintegrin domain. Interactions with egg membrane could be mediated via binding between the disintegrin-like domain to one or more integrin receptors on the egg. The sequence is that of Disintegrin and metalloproteinase domain-containing protein 15 (Adam15) from Mus musculus (Mouse).